We begin with the raw amino-acid sequence, 347 residues long: Guanine nucleotide-binding protein alpha-6 subunit (347 aa).

Residues 30–347 enclose the G-alpha domain; sequence GITQVLLLGA…IIVGHVMDLV (318 aa). Residues 33-46 form a G1 motif region; that stretch reads QVLLLGAGESGKST. GTP is bound by residues 38–45, 172–178, 197–201, 266–269, and Ala322; these read GAGESGKS, LRARVTT, DVGGQ, and NKKD. The Mg(2+) site is built by Ser45 and Thr178. Positions 170–178 are G2 motif; it reads DALRARVTT. A G3 motif region spans residues 193-202; it reads MKIIDVGGQR. A G4 motif region spans residues 262-269; sequence ILFLNKKD. The segment at 320–325 is G5 motif; that stretch reads TIAVDT.

This sequence belongs to the G-alpha family. As to quaternary structure, g proteins are composed of 3 units; alpha, beta and gamma. The alpha chain contains the guanine nucleotide binding site.

In terms of biological role, guanine nucleotide-binding proteins (G proteins) are involved as modulators or transducers in various transmembrane signaling systems. G alpha-6 is involved in the folic acid chemotaxis signal transduction pathway. The sequence is that of Guanine nucleotide-binding protein alpha-6 subunit (gpaF) from Dictyostelium discoideum (Social amoeba).